We begin with the raw amino-acid sequence, 267 residues long: Putative hydro-lyase RALTA_B1245 (267 aa).

It belongs to the D-glutamate cyclase family.

This Cupriavidus taiwanensis (strain DSM 17343 / BCRC 17206 / CCUG 44338 / CIP 107171 / LMG 19424 / R1) (Ralstonia taiwanensis (strain LMG 19424)) protein is Putative hydro-lyase RALTA_B1245.